A 655-amino-acid chain; its full sequence is p-hydroxybenzoic acid efflux pump subunit AaeB (655 aa).

Transmembrane regions (helical) follow at residues 13–33 (FAVKLATAIVLALFVGFHFQL), 38–58 (WAVLTAAIVAAGPAFAAGGEP), 69–89 (LRIIGTFIGCIAGLVIIIAMI), 93–113 (LLMILVCCIWAGFCTWISSLV), 121–141 (WGLAGYTALIIVITIQPEPLL), 152–172 (EIVIGIVCAIMADLLFSPRSI), 370–390 (LFWLWTGWTSGSGVMVMIAVV), 407–427 (FIYGTLAALPLGLLYFLVIIP), 431–451 (QSMLLLCISLAVLGFFLGIEV), and 482–502 (FLDSALGQIVGCVLAFTVILL).

It belongs to the aromatic acid exporter ArAE (TC 2.A.85) family.

The protein resides in the cell inner membrane. Forms an efflux pump with AaeA. Could function as a metabolic relief valve, allowing to eliminate certain compounds when they accumulate to high levels in the cell. In Shigella dysenteriae serotype 1 (strain Sd197), this protein is p-hydroxybenzoic acid efflux pump subunit AaeB.